A 1409-amino-acid polypeptide reads, in one-letter code: DNA-directed RNA polymerase subunit beta' (1409 aa).

Zn(2+) contacts are provided by Cys-70, Cys-72, Cys-85, and Cys-88. Mg(2+) is bound by residues Asp-461, Asp-463, and Asp-465. Residues Cys-833, Cys-907, Cys-914, and Cys-917 each contribute to the Zn(2+) site. Positions Glu-1389–Ala-1409 are disordered.

The protein belongs to the RNA polymerase beta' chain family. In terms of assembly, the RNAP catalytic core consists of 2 alpha, 1 beta, 1 beta' and 1 omega subunit. When a sigma factor is associated with the core the holoenzyme is formed, which can initiate transcription. Mg(2+) is required as a cofactor. Zn(2+) serves as cofactor.

It catalyses the reaction RNA(n) + a ribonucleoside 5'-triphosphate = RNA(n+1) + diphosphate. DNA-dependent RNA polymerase catalyzes the transcription of DNA into RNA using the four ribonucleoside triphosphates as substrates. In Pelobacter propionicus (strain DSM 2379 / NBRC 103807 / OttBd1), this protein is DNA-directed RNA polymerase subunit beta'.